Here is a 901-residue protein sequence, read N- to C-terminus: Viral-enhancing factor (901 aa).

The 304-residue stretch at 27-330 folds into the Peptidase M60 domain; that stretch reads HRRTEVGVVL…IFTWLYNPQR (304 aa). 10 N-linked (GlcNAc...) asparagine; by host glycosylation sites follow: Asn-65, Asn-265, Asn-339, Asn-349, Asn-540, Asn-594, Asn-595, Asn-642, Asn-683, and Asn-698.

Its function is as follows. Involved in disruption of the peritrophic membrane and fusion of nucleocapsids with midgut cells. This Trichoplusia ni (Cabbage looper) protein is Viral-enhancing factor (VEF).